Consider the following 365-residue polypeptide: WAT1-related protein At1g01070 (365 aa).

Transmembrane regions (helical) follow at residues Tyr14–Val34, Val46–Leu66, Phe83–Tyr103, Thr107–Phe127, Ala139–Phe159, Trp189–Phe209, Tyr221–Tyr241, Phe255–Thr275, Val285–Ile305, and Leu310–Trp330. Residues Met27–Leu157 enclose the EamA 1 domain. One can recognise an EamA 2 domain in the interval Ser223–Leu329. The span at Thr340–Asn356 shows a compositional bias: polar residues. Positions Thr340–Val365 are disordered.

Belongs to the drug/metabolite transporter (DMT) superfamily. Plant drug/metabolite exporter (P-DME) (TC 2.A.7.4) family.

It localises to the membrane. This is WAT1-related protein At1g01070 from Arabidopsis thaliana (Mouse-ear cress).